Consider the following 115-residue polypeptide: Mediator of RNA polymerase II transcription subunit 11 (115 aa).

Belongs to the Mediator complex subunit 11 family. As to quaternary structure, component of the Mediator complex.

It localises to the nucleus. Component of the Mediator complex, a coactivator involved in the regulated transcription of nearly all RNA polymerase II-dependent genes. Mediator functions as a bridge to convey information from gene-specific regulatory proteins to the basal RNA polymerase II transcription machinery. The Mediator complex, having a compact conformation in its free form, is recruited to promoters by direct interactions with regulatory proteins and serves for the assembly of a functional pre-initiation complex with RNA polymerase II and the general transcription factors. The protein is Mediator of RNA polymerase II transcription subunit 11 (MED11) of Arabidopsis thaliana (Mouse-ear cress).